The sequence spans 644 residues: Exoribonuclease 2 (644 aa).

The 328-residue stretch at 189–516 folds into the RNB domain; the sequence is REDLTALDFV…NHRLLKAVIK (328 aa). In terms of domain architecture, S1 motif spans 561–643; the sequence is DTRFAAEIVD…ETRSIIARPV (83 aa).

This sequence belongs to the RNR ribonuclease family. RNase II subfamily.

Its subcellular location is the cytoplasm. The catalysed reaction is Exonucleolytic cleavage in the 3'- to 5'-direction to yield nucleoside 5'-phosphates.. Its function is as follows. Involved in mRNA degradation. Hydrolyzes single-stranded polyribonucleotides processively in the 3' to 5' direction. In Escherichia coli O6:K15:H31 (strain 536 / UPEC), this protein is Exoribonuclease 2.